The sequence spans 417 residues: MDIVVLGGGVVGVTSAWYLAKAGHKVTLLERRDGVALETSHANAGQISPGYAAPWAAPGIPLKAAKWLLQKHAPFTVRPTSDPFQLRWMLKMFANCTPAAYAVNKGRMVRLAEYSRDCMKLLRDELSIDYEGRQLGTLQLFRSQAQLDASKRDIEVLEEYGVPYQSLDAAGCEGAEPALARVRGKIVGGLRLPGDETGDCFRFTKAMAAEAQRLGVKFVFNCAIDEIELAQGRAVAVRAGEQRFKADAIVCALGSYATGFLRPLGLDLPVYPVKGYSLTLPMINAEASPRSTVLDETYKVAITRFDERIRVGGMAELSGYNLALNPKRHDTLAMVVGDLFPEGGDISRADFWTGLRPMTPDGTPLVGPSPIPGLWLNTGHGTLGWTMAAGSGQLLCDLISGSDTAISDEGLTLARYG.

3-17 (IVVLGGGVVGVTSAW) is an FAD binding site.

Belongs to the DadA oxidoreductase family. Requires FAD as cofactor.

It catalyses the reaction a D-alpha-amino acid + A + H2O = a 2-oxocarboxylate + AH2 + NH4(+). The protein operates within amino-acid degradation; D-alanine degradation; NH(3) and pyruvate from D-alanine: step 1/1. Its function is as follows. Oxidative deamination of D-amino acids. This is D-amino acid dehydrogenase from Aeromonas hydrophila subsp. hydrophila (strain ATCC 7966 / DSM 30187 / BCRC 13018 / CCUG 14551 / JCM 1027 / KCTC 2358 / NCIMB 9240 / NCTC 8049).